Reading from the N-terminus, the 59-residue chain is Large ribosomal subunit protein uL30 (59 aa).

Belongs to the universal ribosomal protein uL30 family. In terms of assembly, part of the 50S ribosomal subunit.

In Mycobacterium sp. (strain JLS), this protein is Large ribosomal subunit protein uL30.